Consider the following 289-residue polypeptide: 4-hydroxy-tetrahydrodipicolinate synthase (289 aa).

Thr43 lines the pyruvate pocket. Tyr131 functions as the Proton donor/acceptor in the catalytic mechanism. Residue Lys160 is the Schiff-base intermediate with substrate of the active site. Ile200 is a pyruvate binding site.

Belongs to the DapA family. In terms of assembly, homotetramer; dimer of dimers.

The protein localises to the cytoplasm. It carries out the reaction L-aspartate 4-semialdehyde + pyruvate = (2S,4S)-4-hydroxy-2,3,4,5-tetrahydrodipicolinate + H2O + H(+). The protein operates within amino-acid biosynthesis; L-lysine biosynthesis via DAP pathway; (S)-tetrahydrodipicolinate from L-aspartate: step 3/4. Catalyzes the condensation of (S)-aspartate-beta-semialdehyde [(S)-ASA] and pyruvate to 4-hydroxy-tetrahydrodipicolinate (HTPA). The polypeptide is 4-hydroxy-tetrahydrodipicolinate synthase (Methanococcus vannielii (strain ATCC 35089 / DSM 1224 / JCM 13029 / OCM 148 / SB)).